Reading from the N-terminus, the 817-residue chain is Protein kintoun (817 aa).

4 disordered regions span residues 233–259 (AESTARSPASPAPKAVQRPEPTEPRCS), 385–404 (AGAREESADSSGADHGRKSC), 410–445 (AGTAKAEGELVPEPEQDFGGDSVTPLGPGEGTTPEN), and 473–503 (VQTSEEQEGTCHDTSGSDMGGPGTESIKPLC). Residues 386 to 401 (GAREESADSSGADHGR) show a composition bias toward basic and acidic residues. Residues Ser622 and Ser631 each carry the phosphoserine modification. The disordered stretch occupies residues 653-692 (ECSDPDGLQGKEKGVKEECPLSEKENTEHSTTSTADSNSS). The span at 661–680 (QGKEKGVKEECPLSEKENTE) shows a compositional bias: basic and acidic residues. Residues 681–692 (HSTTSTADSNSS) are compositionally biased toward polar residues.

Belongs to the PIH1 family. Kintoun subfamily. In terms of assembly, interacts with CFAP300. Interacts with DNAI2 and HSPA1A. Interacts with DNAAF4. Interacts with DNAAF6/PIH1D3.

The protein resides in the cytoplasm. Its subcellular location is the dynein axonemal particle. Its function is as follows. Required for cytoplasmic pre-assembly of axonemal dyneins, thereby playing a central role in motility in cilia and flagella. Involved in pre-assembly of dynein arm complexes in the cytoplasm before intraflagellar transport loads them for the ciliary compartment. This Rattus norvegicus (Rat) protein is Protein kintoun.